Reading from the N-terminus, the 352-residue chain is UDP-3-O-acylglucosamine N-acyltransferase (352 aa).

The active-site Proton acceptor is the His246.

The protein belongs to the transferase hexapeptide repeat family. LpxD subfamily. In terms of assembly, homotrimer.

It catalyses the reaction a UDP-3-O-[(3R)-3-hydroxyacyl]-alpha-D-glucosamine + a (3R)-hydroxyacyl-[ACP] = a UDP-2-N,3-O-bis[(3R)-3-hydroxyacyl]-alpha-D-glucosamine + holo-[ACP] + H(+). Its pathway is bacterial outer membrane biogenesis; LPS lipid A biosynthesis. In terms of biological role, catalyzes the N-acylation of UDP-3-O-acylglucosamine using 3-hydroxyacyl-ACP as the acyl donor. Is involved in the biosynthesis of lipid A, a phosphorylated glycolipid that anchors the lipopolysaccharide to the outer membrane of the cell. The protein is UDP-3-O-acylglucosamine N-acyltransferase of Chlorobium luteolum (strain DSM 273 / BCRC 81028 / 2530) (Pelodictyon luteolum).